A 350-amino-acid chain; its full sequence is tRNA uridine(34) hydroxylase (350 aa).

Residues 146-240 (DDPDAVFIDM…YARRAREQGL (95 aa)) enclose the Rhodanese domain. The Cysteine persulfide intermediate role is filled by cysteine 200. Over residues 319–328 (RRRRAGRENG) the composition is skewed to basic and acidic residues. The tract at residues 319–350 (RRRRAGRENGNKIFNKSRGRLNSKLSIPDPAE) is disordered.

Belongs to the TrhO family.

The enzyme catalyses uridine(34) in tRNA + AH2 + O2 = 5-hydroxyuridine(34) in tRNA + A + H2O. Functionally, catalyzes oxygen-dependent 5-hydroxyuridine (ho5U) modification at position 34 in tRNAs. This chain is tRNA uridine(34) hydroxylase, found in Salmonella gallinarum (strain 287/91 / NCTC 13346).